Reading from the N-terminus, the 445-residue chain is MKVKMLSRNPDNYVRETKLDIQRVPRNYDPTLHPFEVPREYVRALNATKLERVFAKPFLASLDGHRDGVNCLAKHPKSLASVLSGACDGEVKIWNLTKRKCIRTIQAHEGFVRGMCTRFCGTSFFTVGDDKTVKQWKMDGPGYGEEEEPLYTVLGKTVYTGIDHHWKDPVFATCGQQVDIWDEQRTSPVCSMNWGFDSISSVKFNPVETFLLGSCASDRNIVLYDMRQATPLKKVILEMRTNTICWNPMEAFNFTAANEDYNLYTFDMRALDTPVMVHMDHVSAVLDVDYSPTGKEFVSASFDKSIRIFPVDKSRSREVYHTKRMQHVMCVKWTSDSKYIMCGSDEMNIRLWKANASEKLGVLTSREKAANDYNQKLKEKFQYHPHVKRIARHRHLPKSIYSQIQEQRVMKEARRRKEMNRRKHSKPGSVPIVSERKKHVVAVVK.

The residue at position 49 (Lys49) is an N6-acetyllysine. WD repeat units follow at residues 64–104 (GHRD…CIRT), 107–146 (AHEG…YGEE), 149–191 (PLYT…PVCS), 194–234 (WGFD…PLKK), 236–276 (ILEM…TPVM), 280–319 (DHVS…SREV), and 323–362 (KRMQ…KLGV). The interval 353–441 (KANASEKLGV…IVSERKKHVV (89 aa)) is required for nucleolar location.

This sequence belongs to the WD repeat DCAF13/WDSOF1 family. Component of the DCX(DCAF13) E3 ubiquitin ligase complex, at least composed of CUL4 (CUL4A or CUL4B), DDB1, DCAF13 and RBX1. Interacts (via WD40 domain) with DDB1. Interacts with ESR1 and LATS1. In terms of tissue distribution, uniformly distributed in trophectoderm cells and inner cells mass in blastocyst embryos. Expressed in oocytes as early as the primordial follicle stage. Endometrial expression increases during decidualization and is highly expressed in decidua.

The protein resides in the nucleus. It is found in the nucleolus. It participates in protein modification; protein ubiquitination. Its function is as follows. Part of the small subunit (SSU) processome, first precursor of the small eukaryotic ribosomal subunit. During the assembly of the SSU processome in the nucleolus, many ribosome biogenesis factors, an RNA chaperone and ribosomal proteins associate with the nascent pre-rRNA and work in concert to generate RNA folding, modifications, rearrangements and cleavage as well as targeted degradation of pre-ribosomal RNA by the RNA exosome. Participates in the 18S rRNA processing in growing oocytes, being essential for oocyte nonsurrounded nucleolus (NSN) to surrounded nucleolus (SN) transition. Substrate-recognition component of a DCX (DDB1-CUL4-X-box) E3 ubiquitin-protein ligase complex that plays a key role in embryo preimplantation and is required for normal meiotic cycle progression in oocytes. Acts as a maternal factor that regulates oocyte and zygotic chromatin tightness during maternal to zygotic transition. Also involved in the transformation of the endometrium into the decidua, known as decidualization, providing a solid foundation for implantation of blastocysts. Recognizes the histone methyltransferases SUV39H1 and SUV39H2 and directs them to polyubiquitination and proteasomal degradation, which facilitates the H3K9me3 removal and early zygotic gene expression, essential steps for progressive genome reprogramming and the establishment of pluripotency during preimplantation embryonic development. Supports the spindle assembly and chromosome condensation during oocyte meiotic division by targeting the polyubiquitination and degradation of PTEN, a lipid phosphatase that inhibits PI3K pathway as well as oocyte growth and maturation. Targets PMP22 for polyubiquitination and proteasomal degradation. This is DDB1- and CUL4-associated factor 13 (Dcaf13) from Mus musculus (Mouse).